Reading from the N-terminus, the 85-residue chain is RDS3 complex subunit 10 (85 aa).

Belongs to the SF3b complex composed of CUS1, HSH49, HSH155, RCP1, RDS3 and RSE1.

The protein localises to the nucleus. Its function is as follows. Involved in pre-mRNA splicing. Required for the SF3b integrity and prespliceosome assembly. This is RDS3 complex subunit 10 (YSF3) from Saccharomyces cerevisiae (strain ATCC 204508 / S288c) (Baker's yeast).